The following is a 311-amino-acid chain: Glutamyl-Q tRNA(Asp) synthetase (311 aa).

L-glutamate contacts are provided by residues 14 to 18 (RYAPS) and Glu-50. Positions 17–27 (PSPSGDLHLGN) match the 'HIGH' region motif. Residues Cys-104, Cys-106, Tyr-125, and Cys-129 each coordinate Zn(2+). Tyr-186 and Arg-204 together coordinate L-glutamate. The short motif at 242–246 (RLAKR) is the 'KMSKS' region element. Lys-245 provides a ligand contact to ATP.

This sequence belongs to the class-I aminoacyl-tRNA synthetase family. GluQ subfamily. The cofactor is Zn(2+).

Catalyzes the tRNA-independent activation of glutamate in presence of ATP and the subsequent transfer of glutamate onto a tRNA(Asp). Glutamate is transferred on the 2-amino-5-(4,5-dihydroxy-2-cyclopenten-1-yl) moiety of the queuosine in the wobble position of the QUC anticodon. The protein is Glutamyl-Q tRNA(Asp) synthetase of Nocardia farcinica (strain IFM 10152).